The sequence spans 216 residues: Probable nicotinate-nucleotide adenylyltransferase (216 aa).

The protein belongs to the NadD family.

The catalysed reaction is nicotinate beta-D-ribonucleotide + ATP + H(+) = deamido-NAD(+) + diphosphate. It participates in cofactor biosynthesis; NAD(+) biosynthesis; deamido-NAD(+) from nicotinate D-ribonucleotide: step 1/1. Functionally, catalyzes the reversible adenylation of nicotinate mononucleotide (NaMN) to nicotinic acid adenine dinucleotide (NaAD). The sequence is that of Probable nicotinate-nucleotide adenylyltransferase from Shewanella baltica (strain OS195).